Here is a 211-residue protein sequence, read N- to C-terminus: DNA-directed RNA polymerases I, II, and III subunit RPABC1 (211 aa).

It belongs to the archaeal Rpo5/eukaryotic RPB5 RNA polymerase subunit family. As to quaternary structure, component of the RNA polymerase I (Pol I), RNA polymerase II (Pol II) and RNA polymerase III (Pol III) complexes consisting of at least 13, 12 and 17 subunits, respectively. In RNA Pol II, this subunit is present in 2-fold molar excess over the other subunits.

The protein resides in the nucleus. Its function is as follows. DNA-dependent RNA polymerase catalyzes the transcription of DNA into RNA using the four ribonucleoside triphosphates as substrates. Common component of RNA polymerases I, II and III which synthesize ribosomal RNA precursors, mRNA precursors and many functional non-coding RNAs, and small RNAs, such as 5S rRNA and tRNAs, respectively. Pol II is the central component of the basal RNA polymerase II transcription machinery. Pols are composed of mobile elements that move relative to each other. In Pol II, RPB5 is part of the lower jaw surrounding the central large cleft and thought to grab the incoming DNA template. Seems to be the major component in this process. The polypeptide is DNA-directed RNA polymerases I, II, and III subunit RPABC1 (Caenorhabditis briggsae).